The following is a 239-amino-acid chain: Probable transcriptional regulatory protein Veis_4238 (239 aa).

Residues 1-22 form a disordered region; that stretch reads MAGHSKWANIQHRKGRQDEKRG.

This sequence belongs to the TACO1 family.

It localises to the cytoplasm. In Verminephrobacter eiseniae (strain EF01-2), this protein is Probable transcriptional regulatory protein Veis_4238.